A 204-amino-acid chain; its full sequence is Thiamine-phosphate synthase (204 aa).

4-amino-2-methyl-5-(diphosphooxymethyl)pyrimidine-binding positions include 32-36 and Asp-64; that span reads QLRMK. Mg(2+) contacts are provided by Asp-65 and Asp-84. Thr-103 is a 4-amino-2-methyl-5-(diphosphooxymethyl)pyrimidine binding site. 129–131 contacts 2-[(2R,5Z)-2-carboxy-4-methylthiazol-5(2H)-ylidene]ethyl phosphate; sequence TTT. Position 132 (Lys-132) interacts with 4-amino-2-methyl-5-(diphosphooxymethyl)pyrimidine. Residue Gly-165 coordinates 2-[(2R,5Z)-2-carboxy-4-methylthiazol-5(2H)-ylidene]ethyl phosphate.

The protein belongs to the thiamine-phosphate synthase family. It depends on Mg(2+) as a cofactor.

The catalysed reaction is 2-[(2R,5Z)-2-carboxy-4-methylthiazol-5(2H)-ylidene]ethyl phosphate + 4-amino-2-methyl-5-(diphosphooxymethyl)pyrimidine + 2 H(+) = thiamine phosphate + CO2 + diphosphate. It carries out the reaction 2-(2-carboxy-4-methylthiazol-5-yl)ethyl phosphate + 4-amino-2-methyl-5-(diphosphooxymethyl)pyrimidine + 2 H(+) = thiamine phosphate + CO2 + diphosphate. It catalyses the reaction 4-methyl-5-(2-phosphooxyethyl)-thiazole + 4-amino-2-methyl-5-(diphosphooxymethyl)pyrimidine + H(+) = thiamine phosphate + diphosphate. Its pathway is cofactor biosynthesis; thiamine diphosphate biosynthesis; thiamine phosphate from 4-amino-2-methyl-5-diphosphomethylpyrimidine and 4-methyl-5-(2-phosphoethyl)-thiazole: step 1/1. Functionally, condenses 4-methyl-5-(beta-hydroxyethyl)thiazole monophosphate (THZ-P) and 2-methyl-4-amino-5-hydroxymethyl pyrimidine pyrophosphate (HMP-PP) to form thiamine monophosphate (TMP). This chain is Thiamine-phosphate synthase, found in Bacteroides fragilis (strain ATCC 25285 / DSM 2151 / CCUG 4856 / JCM 11019 / LMG 10263 / NCTC 9343 / Onslow / VPI 2553 / EN-2).